Consider the following 806-residue polypeptide: Lon protease (806 aa).

Residues 14 to 207 form the Lon N-terminal domain; that stretch reads YPVLPLRDIV…KALGFMEGEI (194 aa). Residue 359 to 366 coordinates ATP; it reads GPPGVGKT. A Lon proteolytic domain is found at 594–775; sequence DDQVGVVTGL…GEVIAHALLR (182 aa). Residues Ser681 and Lys724 contribute to the active site. Residues 786–806 are disordered; sequence SQPAALPSVDSQDEAGTSIAH.

This sequence belongs to the peptidase S16 family. In terms of assembly, homohexamer. Organized in a ring with a central cavity.

The protein localises to the cytoplasm. It catalyses the reaction Hydrolysis of proteins in presence of ATP.. In terms of biological role, ATP-dependent serine protease that mediates the selective degradation of mutant and abnormal proteins as well as certain short-lived regulatory proteins. Required for cellular homeostasis and for survival from DNA damage and developmental changes induced by stress. Degrades polypeptides processively to yield small peptide fragments that are 5 to 10 amino acids long. Binds to DNA in a double-stranded, site-specific manner. In R.meliloti it is important for controlling the turnover of a constitutively expressed protein(s) that, when unregulated, disrupts normal nodule formation and normal growth. In Rhizobium meliloti (strain 1021) (Ensifer meliloti), this protein is Lon protease.